The primary structure comprises 556 residues: GDP-Man:Man(3)GlcNAc(2)-PP-Dol alpha-1,2-mannosyltransferase (556 aa).

Residues 1–7 (MANGLFT) lie on the Lumenal side of the membrane. Residues 8–28 (YVAISLFTIGPLLALFIPFVW) traverse the membrane as a helical segment. The Cytoplasmic portion of the chain corresponds to 29–184 (RLVGSSLGWY…RWVLASTWPY (156 aa)). Residues 64 to 79 (SKSAKGRKAEKEDRDT) show a composition bias toward basic and acidic residues. The disordered stretch occupies residues 64–86 (SKSAKGRKAEKEDRDTFNNTEAT). Positions 185–205 (FTLAGQSFGSLIMAWDAFSLL) form an intramembrane region, helical. Topologically, residues 206–454 (VPDIFVDTMG…VGVNGMWNEH (249 aa)) are cytoplasmic. The segment at residues 455 to 475 (FGIGVVEYQAAGLISVVHDSG) is an intramembrane region (helical). At 476 to 556 (GPKLDIVVEV…KAVEKPKSRQ (81 aa)) the chain is on the cytoplasmic side.

It belongs to the glycosyltransferase group 1 family. Glycosyltransferase 4 subfamily.

Its subcellular location is the endoplasmic reticulum membrane. The catalysed reaction is an alpha-D-Man-(1-&gt;3)-[alpha-D-Man-(1-&gt;6)]-beta-D-Man-(1-&gt;4)-beta-D-GlcNAc-(1-&gt;4)-alpha-D-GlcNAc-diphospho-di-trans,poly-cis-dolichol + 2 GDP-alpha-D-mannose = an alpha-D-Man-(1-&gt;2)-alpha-D-Man-(1-&gt;2)-alpha-D-Man-(1-&gt;3)-[alpha-D-Man-(1-&gt;6)]-beta-D-Man-(1-&gt;4)-beta-D-GlcNAc-(1-&gt;4)-alpha-D-GlcNAc-diphospho-di-trans,poly-cis-dolichol + 2 GDP + 2 H(+). It functions in the pathway protein modification; protein glycosylation. Functionally, GDP-Man:Man(3)GlcNAc(2)-PP-Dol alpha-1,2-mannosyltransferase that operates in the biosynthetic pathway of dolichol-linked oligosaccharides, the glycan precursors employed in protein asparagine (N)-glycosylation. The assembly of dolichol-linked oligosaccharides begins on the cytosolic side of the endoplasmic reticulum membrane and finishes in its lumen. The sequential addition of sugars to dolichol pyrophosphate produces dolichol-linked oligosaccharides containing fourteen sugars, including two GlcNAcs, nine mannoses and three glucoses. Once assembled, the oligosaccharide is transferred from the lipid to nascent proteins by oligosaccharyltransferases. Catalyzes, on the cytoplasmic face of the endoplasmic reticulum, the addition of the fourth and fifth mannose residues to the dolichol-linked oligosaccharide chain, to produce Man(5)GlcNAc(2)-PP-dolichol core oligosaccharide. The polypeptide is GDP-Man:Man(3)GlcNAc(2)-PP-Dol alpha-1,2-mannosyltransferase (alg-11) (Neurospora crassa (strain ATCC 24698 / 74-OR23-1A / CBS 708.71 / DSM 1257 / FGSC 987)).